Reading from the N-terminus, the 322-residue chain is D-alanine--D-alanine ligase (322 aa).

One can recognise an ATP-grasp domain in the interval 108–311; it reads KEFYYNAELP…FPSLLDTLIE (204 aa). ATP is bound at residue 136-192; sequence IEDLGLPLVVKPACAGSSIGISLAHTEEELLAGINHARDCSAGAIMVEQFIKGRELT. Residues Asp265, Glu278, and Asn280 each coordinate Mg(2+).

This sequence belongs to the D-alanine--D-alanine ligase family. Mg(2+) is required as a cofactor. The cofactor is Mn(2+).

The protein resides in the cytoplasm. It carries out the reaction 2 D-alanine + ATP = D-alanyl-D-alanine + ADP + phosphate + H(+). The protein operates within cell wall biogenesis; peptidoglycan biosynthesis. In terms of biological role, cell wall formation. This chain is D-alanine--D-alanine ligase, found in Desulfotalea psychrophila (strain LSv54 / DSM 12343).